Here is a 642-residue protein sequence, read N- to C-terminus: Threonine--tRNA ligase (642 aa).

One can recognise a TGS domain in the interval 1–61; the sequence is MPIITLPDGS…TADSELAIIT (61 aa). The tract at residues 243 to 534 is catalytic; sequence DHRKIGKQLD…LIEEYAGKFP (292 aa). Zn(2+) is bound by residues Cys334, His385, and His511.

This sequence belongs to the class-II aminoacyl-tRNA synthetase family. As to quaternary structure, homodimer. Zn(2+) serves as cofactor.

It is found in the cytoplasm. It carries out the reaction tRNA(Thr) + L-threonine + ATP = L-threonyl-tRNA(Thr) + AMP + diphosphate + H(+). Functionally, catalyzes the attachment of threonine to tRNA(Thr) in a two-step reaction: L-threonine is first activated by ATP to form Thr-AMP and then transferred to the acceptor end of tRNA(Thr). Also edits incorrectly charged L-seryl-tRNA(Thr). The sequence is that of Threonine--tRNA ligase from Shewanella frigidimarina (strain NCIMB 400).